Here is a 266-residue protein sequence, read N- to C-terminus: DNA repair protein RecO (266 aa).

The protein belongs to the RecO family.

Its function is as follows. Involved in DNA repair and RecF pathway recombination. The protein is DNA repair protein RecO of Synechococcus elongatus (strain ATCC 33912 / PCC 7942 / FACHB-805) (Anacystis nidulans R2).